Consider the following 457-residue polypeptide: Cysteine--tRNA ligase (457 aa).

C28 is a Zn(2+) binding site. Positions 30-40 (MTVYDYCHLGH) match the 'HIGH' region motif. Residues C209, H234, and E238 each contribute to the Zn(2+) site. A 'KMSKS' region motif is present at residues 266–270 (KMSKS). ATP is bound at residue K269.

This sequence belongs to the class-I aminoacyl-tRNA synthetase family. As to quaternary structure, monomer. Requires Zn(2+) as cofactor.

The protein resides in the cytoplasm. The enzyme catalyses tRNA(Cys) + L-cysteine + ATP = L-cysteinyl-tRNA(Cys) + AMP + diphosphate. In Laribacter hongkongensis (strain HLHK9), this protein is Cysteine--tRNA ligase.